The chain runs to 409 residues: uncharacterized protein (409 aa).

The next 10 membrane-spanning stretches (helical) occupy residues 62–82, 100–120, 123–143, 152–172, 183–203, 252–272, 293–313, 328–348, 355–375, and 376–396; these read FSLGIAAEAVLFIFALWWVWI, LLLFTLMFFGIVMAIALPEAF, MGLLFAVAYSAMQVSRSLFAL, ASFMTFFRITAWLTISSTFWI, VVLWIVALVVEYTGPTVRYWV, GTPWVLCFSFLTTVLMWWIYF, AQYLFTYGHLPIVGGIIFTAV, YNFALAQLGGPILFLAGTMWM, VLPYSHVFGISLLTASFTLVP, and FVANFAIQALTGVILLVVAVW.

Its subcellular location is the cell membrane. This is an uncharacterized protein from Rhizobium meliloti (strain 1021) (Ensifer meliloti).